Consider the following 269-residue polypeptide: uncharacterized protein (269 aa).

Helical transmembrane passes span 21–43, 48–70, 121–143, 147–166, 205–227, and 242–264; these read LNVW…ILFT, LFLI…FSLI, YLIL…VFTF, FIIA…FWII, SLEV…LFQF, and FVAF…YLLW.

Its subcellular location is the cell membrane. This is an uncharacterized protein from Aquifex aeolicus (strain VF5).